The sequence spans 376 residues: Carbamoyl phosphate synthase small chain (376 aa).

The tract at residues 1-187 (MRAFLALEDG…AADGAYAWPG (187 aa)) is CPSase. 3 residues coordinate L-glutamine: serine 45, glycine 239, and glycine 241. In terms of domain architecture, Glutamine amidotransferase type-1 spans 191-376 (RLVVYDYGIK…RGMVREAVGR (186 aa)). The Nucleophile role is filled by cysteine 266. Leucine 267, glutamine 270, asparagine 308, glycine 310, and phenylalanine 311 together coordinate L-glutamine. Active-site residues include histidine 349 and glutamate 351.

It belongs to the CarA family. In terms of assembly, composed of two chains; the small (or glutamine) chain promotes the hydrolysis of glutamine to ammonia, which is used by the large (or ammonia) chain to synthesize carbamoyl phosphate. Tetramer of heterodimers (alpha,beta)4.

It carries out the reaction hydrogencarbonate + L-glutamine + 2 ATP + H2O = carbamoyl phosphate + L-glutamate + 2 ADP + phosphate + 2 H(+). The catalysed reaction is L-glutamine + H2O = L-glutamate + NH4(+). The protein operates within amino-acid biosynthesis; L-arginine biosynthesis; carbamoyl phosphate from bicarbonate: step 1/1. It participates in pyrimidine metabolism; UMP biosynthesis via de novo pathway; (S)-dihydroorotate from bicarbonate: step 1/3. In terms of biological role, small subunit of the glutamine-dependent carbamoyl phosphate synthetase (CPSase). CPSase catalyzes the formation of carbamoyl phosphate from the ammonia moiety of glutamine, carbonate, and phosphate donated by ATP, constituting the first step of 2 biosynthetic pathways, one leading to arginine and/or urea and the other to pyrimidine nucleotides. The small subunit (glutamine amidotransferase) binds and cleaves glutamine to supply the large subunit with the substrate ammonia. The sequence is that of Carbamoyl phosphate synthase small chain from Nitratidesulfovibrio vulgaris (strain DSM 19637 / Miyazaki F) (Desulfovibrio vulgaris).